The primary structure comprises 169 residues: Cytochrome c-type biogenesis protein CcmE (169 aa).

Residues 1 to 7 (MTRKSRR) lie on the Cytoplasmic side of the membrane. Residues 8-28 (LILIAACGAVLALALGLILSA) form a helical; Signal-anchor for type II membrane protein membrane-spanning segment. Over 29–169 (MSGSIVFFRS…DATLGQRSER (141 aa)) the chain is Periplasmic. Residues H122 and Y126 each coordinate heme. The interval 135-169 (LKAQGRWQEGGGKEAPKDAAKPASADATLGQRSER) is disordered. A compositionally biased stretch (basic and acidic residues) spans 145–154 (GGKEAPKDAA).

The protein belongs to the CcmE/CycJ family.

The protein resides in the cell inner membrane. Functionally, heme chaperone required for the biogenesis of c-type cytochromes. Transiently binds heme delivered by CcmC and transfers the heme to apo-cytochromes in a process facilitated by CcmF and CcmH. This chain is Cytochrome c-type biogenesis protein CcmE, found in Methylorubrum populi (strain ATCC BAA-705 / NCIMB 13946 / BJ001) (Methylobacterium populi).